Reading from the N-terminus, the 274-residue chain is Putative septum site-determining protein MinD (274 aa).

Residue 22–29 (KGGVGKTT) participates in ATP binding.

It belongs to the ParA family. MinD subfamily.

The protein resides in the plastid. Its subcellular location is the chloroplast. ATPase required for the correct placement of the division site. The chain is Putative septum site-determining protein MinD (minD-A) from Nephroselmis olivacea (Green alga).